The sequence spans 296 residues: Malonyl-[acyl-carrier protein] O-methyltransferase (296 aa).

This sequence belongs to the methyltransferase superfamily.

It catalyses the reaction malonyl-[ACP] + S-adenosyl-L-methionine = malonyl-[ACP] methyl ester + S-adenosyl-L-homocysteine. Its pathway is cofactor biosynthesis; biotin biosynthesis. Its function is as follows. Converts the free carboxyl group of a malonyl-thioester to its methyl ester by transfer of a methyl group from S-adenosyl-L-methionine (SAM). It allows to synthesize pimeloyl-ACP via the fatty acid synthetic pathway. In Methylovorus sp. (strain MP688), this protein is Malonyl-[acyl-carrier protein] O-methyltransferase.